The following is a 365-amino-acid chain: Chorismate synthase (365 aa).

Arg-48 is a binding site for NADP(+). FMN-binding positions include 125–127 (RGS), Gly-286, 301–305 (KPTPS), and Arg-328.

It belongs to the chorismate synthase family. The cofactor is FMNH2.

The enzyme catalyses 5-O-(1-carboxyvinyl)-3-phosphoshikimate = chorismate + phosphate. It participates in metabolic intermediate biosynthesis; chorismate biosynthesis; chorismate from D-erythrose 4-phosphate and phosphoenolpyruvate: step 7/7. Functionally, catalyzes the anti-1,4-elimination of the C-3 phosphate and the C-6 proR hydrogen from 5-enolpyruvylshikimate-3-phosphate (EPSP) to yield chorismate, which is the branch point compound that serves as the starting substrate for the three terminal pathways of aromatic amino acid biosynthesis. This reaction introduces a second double bond into the aromatic ring system. In Methanosphaera stadtmanae (strain ATCC 43021 / DSM 3091 / JCM 11832 / MCB-3), this protein is Chorismate synthase.